Here is a 72-residue protein sequence, read N- to C-terminus: Translation initiation factor IF-1 (72 aa).

One can recognise an S1-like domain in the interval 1–72; the sequence is MSKEDMIEFS…TKGRITFRFK (72 aa).

The protein belongs to the IF-1 family. Component of the 30S ribosomal translation pre-initiation complex which assembles on the 30S ribosome in the order IF-2 and IF-3, IF-1 and N-formylmethionyl-tRNA(fMet); mRNA recruitment can occur at any time during PIC assembly.

The protein resides in the cytoplasm. Its function is as follows. One of the essential components for the initiation of protein synthesis. Stabilizes the binding of IF-2 and IF-3 on the 30S subunit to which N-formylmethionyl-tRNA(fMet) subsequently binds. Helps modulate mRNA selection, yielding the 30S pre-initiation complex (PIC). Upon addition of the 50S ribosomal subunit IF-1, IF-2 and IF-3 are released leaving the mature 70S translation initiation complex. This is Translation initiation factor IF-1 from Granulibacter bethesdensis (strain ATCC BAA-1260 / CGDNIH1).